We begin with the raw amino-acid sequence, 367 residues long: Glutamate 5-kinase (367 aa).

Residue Lys-10 coordinates ATP. Residues Ser-50, Asp-137, and Asn-149 each contribute to the substrate site. Residues 169 to 170 (TD) and 211 to 217 (TGGMSTK) contribute to the ATP site. A PUA domain is found at 275–353 (AGEITVDEGA…QQIDAILGYE (79 aa)).

The protein belongs to the glutamate 5-kinase family.

It localises to the cytoplasm. The enzyme catalyses L-glutamate + ATP = L-glutamyl 5-phosphate + ADP. It participates in amino-acid biosynthesis; L-proline biosynthesis; L-glutamate 5-semialdehyde from L-glutamate: step 1/2. Catalyzes the transfer of a phosphate group to glutamate to form L-glutamate 5-phosphate. This chain is Glutamate 5-kinase, found in Salmonella arizonae (strain ATCC BAA-731 / CDC346-86 / RSK2980).